Reading from the N-terminus, the 1389-residue chain is DNA-directed RNA polymerase subunit beta (1389 aa).

This sequence belongs to the RNA polymerase beta chain family. In terms of assembly, in plastids the minimal PEP RNA polymerase catalytic core is composed of four subunits: alpha, beta, beta', and beta''. When a (nuclear-encoded) sigma factor is associated with the core the holoenzyme is formed, which can initiate transcription.

It localises to the plastid. Its subcellular location is the chloroplast. It catalyses the reaction RNA(n) + a ribonucleoside 5'-triphosphate = RNA(n+1) + diphosphate. DNA-dependent RNA polymerase catalyzes the transcription of DNA into RNA using the four ribonucleoside triphosphates as substrates. This Phaeodactylum tricornutum (strain CCAP 1055/1) protein is DNA-directed RNA polymerase subunit beta.